The sequence spans 369 residues: Glutamate 5-kinase (369 aa).

K11 contacts ATP. Substrate-binding residues include S51, D138, and N150. Residues 170–171 and 212–218 contribute to the ATP site; these read TD and TGGMATK. The 79-residue stretch at 277-355 folds into the PUA domain; the sequence is NGTIVIDDGA…QDIYAVLGYE (79 aa).

Belongs to the glutamate 5-kinase family.

It localises to the cytoplasm. It carries out the reaction L-glutamate + ATP = L-glutamyl 5-phosphate + ADP. The protein operates within amino-acid biosynthesis; L-proline biosynthesis; L-glutamate 5-semialdehyde from L-glutamate: step 1/2. In terms of biological role, catalyzes the transfer of a phosphate group to glutamate to form L-glutamate 5-phosphate. This chain is Glutamate 5-kinase, found in Aliivibrio salmonicida (strain LFI1238) (Vibrio salmonicida (strain LFI1238)).